The sequence spans 316 residues: Aspartate carbamoyltransferase catalytic subunit (316 aa).

Carbamoyl phosphate-binding residues include arginine 58 and threonine 59. Residue lysine 86 coordinates L-aspartate. The carbamoyl phosphate site is built by arginine 108, histidine 136, and glutamine 139. L-aspartate is bound by residues arginine 169 and arginine 223. Residues glycine 264 and proline 265 each contribute to the carbamoyl phosphate site.

This sequence belongs to the aspartate/ornithine carbamoyltransferase superfamily. ATCase family. As to quaternary structure, heterododecamer (2C3:3R2) of six catalytic PyrB chains organized as two trimers (C3), and six regulatory PyrI chains organized as three dimers (R2).

The enzyme catalyses carbamoyl phosphate + L-aspartate = N-carbamoyl-L-aspartate + phosphate + H(+). Its pathway is pyrimidine metabolism; UMP biosynthesis via de novo pathway; (S)-dihydroorotate from bicarbonate: step 2/3. Catalyzes the condensation of carbamoyl phosphate and aspartate to form carbamoyl aspartate and inorganic phosphate, the committed step in the de novo pyrimidine nucleotide biosynthesis pathway. The chain is Aspartate carbamoyltransferase catalytic subunit from Dinoroseobacter shibae (strain DSM 16493 / NCIMB 14021 / DFL 12).